The chain runs to 219 residues: uncharacterized protein (219 aa).

A run of 2 helical transmembrane segments spans residues 8–28 and 194–214; these read MILFLLVGLAVVLSGCATLSV and GIPGFEAALAIVGLLAAGLLF.

Its subcellular location is the cell membrane. This is an uncharacterized protein from Archaeoglobus fulgidus (strain ATCC 49558 / DSM 4304 / JCM 9628 / NBRC 100126 / VC-16).